A 357-amino-acid polypeptide reads, in one-letter code: MGCFFSKRRKPAQGGQQQGASQEPAAGEEKAPQYSWDQRAKVDPKDYTFSGLKDETVGRLPGRVAGQQFVIQDCENCSIYIFDHSATVTIDDCVNCQIFLGPIKGSVFFRNCKDCKCIVACQQFRTRDCRRLEVFLCCATQPIIESSTGMKFGCFQYYYPELALQFKDAGLSIFNNTWSNIHDFTPVSGENNWGLLPENAVVQDYVPLPASEELKAVRVSTDAMKSIIPITRGQRQKNSDESCLAVFFAGDYTTANARKLIDEMTGKGFQLVQTKEVSMKAEDAQRVFQQCASEFIPLLERGPVVALEFNGDGAVEGCRNTVNDVFNGTKVFVSESKASASQDVDNFYNFADMQMGM.

A compositionally biased stretch (basic residues) spans 1-11 (MGCFFSKRRKP). The disordered stretch occupies residues 1–39 (MGCFFSKRRKPAQGGQQQGASQEPAAGEEKAPQYSWDQR). Gly2 carries N-myristoyl glycine lipidation. Residue Cys3 is the site of S-palmitoyl cysteine attachment. Residues 12 to 25 (AQGGQQQGASQEPA) show a composition bias toward low complexity. In terms of domain architecture, C-CAP/cofactor C-like spans 32 to 186 (PQYSWDQRAK…TWSNIHDFTP (155 aa)). Residues 105 to 106 (GS) and 122 to 125 (QQFR) each bind GTP.

This sequence belongs to the TBCC family. Post-translationally, myristoylated on Gly-2; which may be required for membrane targeting. Palmitoylated on Cys-3; which may be required for plasma membrane targeting.

The protein resides in the cell membrane. Its function is as follows. Acts as a GTPase-activating protein (GAP) for tubulin in concert with tubulin-specific chaperone C, but does not enhance tubulin heterodimerization. Acts as a GTPase-activating protein. May act as guanine nucleotide dissociation inhibitor towards ADP-ribosylation factor-like proteins. The protein is Protein XRP2 (RP2) of Gallus gallus (Chicken).